The following is a 145-amino-acid chain: MLFIKSLLLLLSLIFAVSNATGYVGFKVDGPGCNATKIITLENGACQTVCTNLYGKVTPTNDPSKFNLNPFIDVDCKTPLMAEQQVTCLPDNKPFKVSTLTVTCIPDTTSSSTSPSSTSPSSTSPASTLIGSIAFVTLAALFALI.

The N-terminal stretch at Met1–Gly22 is a signal peptide. A glycan (N-linked (GlcNAc...) asparagine) is linked at Asn34. The tract at residues Asp107 to Ala126 is disordered. The segment covering Thr108–Ala126 has biased composition (low complexity). A lipid anchor (GPI-like-anchor amidated serine) is attached at Ser117. A propeptide spans Thr118–Ile145 (removed in mature form).

Belongs to the ponticulin family. In terms of processing, the GPI-like-anchor contains a phosphoceramide group, rather than a phosphatidyl group.

The protein localises to the cell membrane. Functionally, binds F-actin and nucleates actin assembly. The protein is Ponticulin-like protein B (ponB) of Dictyostelium discoideum (Social amoeba).